The following is a 365-amino-acid chain: Transcription factor TCP2 (365 aa).

Residues 42–100 form the TCP domain; sequence GKDRHSKVLTSKGPRDRRVRLSVSTALQFYDLQDRLGYDQPSKAVEWLIKAAEDSISEL. Low complexity predominate over residues 130-150; sequence KSACSSNSDTSKNSSGLSLSR. Disordered regions lie at residues 130 to 202 and 220 to 245; these read KSAC…SAPS and QTHF…HPHH. The region spanning 151–172 is the R domain; it reads SELRDKARERARERTAKETKER. The segment covering 151 to 176 has biased composition (basic and acidic residues); that stretch reads SELRDKARERARERTAKETKERDHNH. Residues 177–202 are compositionally biased toward polar residues; it reads TSFTDLLNSGSDPVNSNRQWMASAPS.

In terms of assembly, interacts with SPL. Interacts with CRY1. Expressed in cotyledons, particularly in the vascular region, in leaves, roots, buds, flowers and immature siliques.

Its subcellular location is the nucleus. In terms of biological role, plays a pivotal role in the control of morphogenesis of shoot organs by negatively regulating the expression of boundary-specific genes such as CUC genes, probably through the induction of miRNA (e.g. miR164). Participates in ovule development. Promotes light-regulated transcription of CHS, CAB, HYH and HY5. Positively regulates photomorphogenesis (e.g. hypocotyl elongation inhibition and cotyledon opening in response to blue light). The sequence is that of Transcription factor TCP2 from Arabidopsis thaliana (Mouse-ear cress).